Reading from the N-terminus, the 884-residue chain is Probable mixed-linked glucan synthase 9 (884 aa).

Low complexity predominate over residues 1–27 (MALSPAAAGRTGRNNNNDAGLADPLLP). The disordered stretch occupies residues 1 to 34 (MALSPAAAGRTGRNNNNDAGLADPLLPAGGGGGG). The next 2 helical transmembrane spans lie at 73 to 93 (VLLHPYRLLTLVRLIAVVLFL) and 104 to 124 (AMWLWWISIAGDFWFGVTWLL). Residue Asp-195 is part of the active site. Substrate-binding residues include Asp-396 and Asp-398. Asp-565 is a catalytic residue. Helical transmembrane passes span 640 to 660 (TAYPVSALFMVVYDLLPVIWL), 672 to 692 (FSTYVAYLVAVIAMIEVIGLV), 708 to 728 (EQFYMIGATGVYLAAVLHIVL), 765 to 785 (LLAPTVVVMAVNVTAIGAAAG), 802 to 822 (AGLVFNVWVLVLLYPFALGIM), and 830 to 850 (CALFALLVAACAAVAAGFVAV).

This sequence belongs to the glycosyltransferase 2 family. Plant cellulose synthase-like F subfamily.

Its subcellular location is the golgi apparatus membrane. May catalyze both beta-1,3 and beta-1,4 glycosidic linkage on beta-D-glucan. Essential for (1,3;1,4)-beta-D-glucans synthesis in grasses and cereals (Poaceae). The mixed-linked glucans (which are not present in walls of dicotyledons or most other monocotyledonous plants) are particularly important constituents of the walls of the starchy endosperm and aleurone cells of cereal grains such as oats, wheat, rice and barley. They can account for up to 70% by weight of the wall. In Oryza sativa subsp. japonica (Rice), this protein is Probable mixed-linked glucan synthase 9 (CSLF9).